The chain runs to 309 residues: Wnt inhibitor of Dorsal protein (309 aa).

Residues 1 to 16 (MIFAITFFMGITSTLA) form the signal peptide. Intrachain disulfides connect cysteine 51-cysteine 62, cysteine 102-cysteine 110, cysteine 112-cysteine 121, cysteine 162-cysteine 179, cysteine 164-cysteine 174, cysteine 232-cysteine 269, cysteine 248-cysteine 262, cysteine 266-cysteine 308, cysteine 284-cysteine 299, and cysteine 286-cysteine 296.

This sequence belongs to the Wnt family.

The protein resides in the secreted. The protein localises to the extracellular space. It localises to the extracellular matrix. In terms of biological role, binds as a ligand to a family of frizzled seven-transmembrane receptors and acts through a cascade of genes on the nucleus. This Drosophila melanogaster (Fruit fly) protein is Wnt inhibitor of Dorsal protein (wntD).